A 487-amino-acid polypeptide reads, in one-letter code: Acetyl-coenzyme A carboxylase carboxyl transferase subunit beta, chloroplastic (487 aa).

The interval 180-201 (SRNSSENEGSSKRTRTKGSDLT) is disordered. One can recognise a CoA carboxyltransferase N-terminal domain in the interval 218–487 (LWVQCENCYG…PLNQKSSKIK (270 aa)). Zn(2+)-binding residues include Cys222, Cys225, Cys241, and Cys244. The segment at 222–244 (CENCYGLNYKKFLKSKMNICEQC) adopts a C4-type zinc-finger fold.

The protein belongs to the AccD/PCCB family. Acetyl-CoA carboxylase is a heterohexamer composed of biotin carboxyl carrier protein, biotin carboxylase and 2 subunits each of ACCase subunit alpha and ACCase plastid-coded subunit beta (accD). Zn(2+) serves as cofactor.

The protein resides in the plastid. Its subcellular location is the chloroplast stroma. It catalyses the reaction N(6)-carboxybiotinyl-L-lysyl-[protein] + acetyl-CoA = N(6)-biotinyl-L-lysyl-[protein] + malonyl-CoA. It functions in the pathway lipid metabolism; malonyl-CoA biosynthesis; malonyl-CoA from acetyl-CoA: step 1/1. Component of the acetyl coenzyme A carboxylase (ACC) complex. Biotin carboxylase (BC) catalyzes the carboxylation of biotin on its carrier protein (BCCP) and then the CO(2) group is transferred by the transcarboxylase to acetyl-CoA to form malonyl-CoA. This Atropa belladonna (Belladonna) protein is Acetyl-coenzyme A carboxylase carboxyl transferase subunit beta, chloroplastic.